A 321-amino-acid chain; its full sequence is uncharacterized protein (321 aa).

Residues 157–220 form a disordered region; it reads TLEQPIEEDF…EGAEEDSHEH (64 aa). The segment covering 161 to 214 has biased composition (acidic residues); it reads PIEEDFDEQDENDQNERDEDDAEEQEEDEVEEEEEEQQEEEEGENDEELTEGAE. Residues 167–212 adopt a coiled-coil conformation; sequence DEQDENDQNERDEDDAEEQEEDEVEEEEEEQQEEEEGENDEELTEG.

This is an uncharacterized protein from Dictyostelium discoideum (Social amoeba).